A 465-amino-acid polypeptide reads, in one-letter code: tRNA-2-methylthio-N(6)-dimethylallyladenosine synthase (465 aa).

One can recognise an MTTase N-terminal domain in the interval 18 to 136; sequence RKLYIETYGC…LPNLVGAAEQ (119 aa). [4Fe-4S] cluster contacts are provided by C27, C63, C100, C174, C178, and C181. Residues 160–392 form the Radical SAM core domain; that stretch reads GGVHINGFVS…IALQNRLSEE (233 aa). Residues 395–458 enclose the TRAM domain; sequence KRDISKTFEV…SATLFGEVVE (64 aa).

It belongs to the methylthiotransferase family. MiaB subfamily. Monomer. The cofactor is [4Fe-4S] cluster.

The protein resides in the cytoplasm. The enzyme catalyses N(6)-dimethylallyladenosine(37) in tRNA + (sulfur carrier)-SH + AH2 + 2 S-adenosyl-L-methionine = 2-methylsulfanyl-N(6)-dimethylallyladenosine(37) in tRNA + (sulfur carrier)-H + 5'-deoxyadenosine + L-methionine + A + S-adenosyl-L-homocysteine + 2 H(+). Its function is as follows. Catalyzes the methylthiolation of N6-(dimethylallyl)adenosine (i(6)A), leading to the formation of 2-methylthio-N6-(dimethylallyl)adenosine (ms(2)i(6)A) at position 37 in tRNAs that read codons beginning with uridine. This chain is tRNA-2-methylthio-N(6)-dimethylallyladenosine synthase, found in Porphyromonas gingivalis (strain ATCC 33277 / DSM 20709 / CIP 103683 / JCM 12257 / NCTC 11834 / 2561).